A 239-amino-acid polypeptide reads, in one-letter code: Pimeloyl-[acyl-carrier protein] methyl ester esterase (239 aa).

Substrate-binding positions include Trp20, 77-78 (SM), and 138-142 (FISLQ). Residue Ser77 is the Nucleophile of the active site. Residues Asp192 and His220 contribute to the active site. Position 220 (His220) interacts with substrate.

This sequence belongs to the AB hydrolase superfamily. Carboxylesterase BioH family. In terms of assembly, monomer.

It localises to the cytoplasm. The catalysed reaction is 6-carboxyhexanoyl-[ACP] methyl ester + H2O = 6-carboxyhexanoyl-[ACP] + methanol + H(+). Its pathway is cofactor biosynthesis; biotin biosynthesis. Its function is as follows. The physiological role of BioH is to remove the methyl group introduced by BioC when the pimeloyl moiety is complete. It allows to synthesize pimeloyl-ACP via the fatty acid synthetic pathway through the hydrolysis of the ester bonds of pimeloyl-ACP esters. The polypeptide is Pimeloyl-[acyl-carrier protein] methyl ester esterase (Legionella pneumophila (strain Paris)).